A 925-amino-acid chain; its full sequence is Protein translocase subunit SecA (925 aa).

Residues Gln87, 105-109, and Asp512 each bind ATP; that span reads GEGKT. Positions 910, 912, 921, and 922 each coordinate Zn(2+).

This sequence belongs to the SecA family. Monomer and homodimer. Part of the essential Sec protein translocation apparatus which comprises SecA, SecYEG and auxiliary proteins SecDF-YajC and YidC. The cofactor is Zn(2+).

The protein localises to the cell inner membrane. The protein resides in the cytoplasm. The enzyme catalyses ATP + H2O + cellular proteinSide 1 = ADP + phosphate + cellular proteinSide 2.. Functionally, part of the Sec protein translocase complex. Interacts with the SecYEG preprotein conducting channel. Has a central role in coupling the hydrolysis of ATP to the transfer of proteins into and across the cell membrane, serving both as a receptor for the preprotein-SecB complex and as an ATP-driven molecular motor driving the stepwise translocation of polypeptide chains across the membrane. The protein is Protein translocase subunit SecA of Psychrobacter sp. (strain PRwf-1).